A 386-amino-acid chain; its full sequence is Succinyl-diaminopimelate desuccinylase (386 aa).

His76 contributes to the Zn(2+) binding site. Asp78 is a catalytic residue. Asp110 provides a ligand contact to Zn(2+). Catalysis depends on Glu144, which acts as the Proton acceptor. Zn(2+)-binding residues include Glu145, Glu173, and His359.

The protein belongs to the peptidase M20A family. DapE subfamily. As to quaternary structure, homodimer. Requires Zn(2+) as cofactor. Co(2+) is required as a cofactor.

The enzyme catalyses N-succinyl-(2S,6S)-2,6-diaminopimelate + H2O = (2S,6S)-2,6-diaminopimelate + succinate. The protein operates within amino-acid biosynthesis; L-lysine biosynthesis via DAP pathway; LL-2,6-diaminopimelate from (S)-tetrahydrodipicolinate (succinylase route): step 3/3. Functionally, catalyzes the hydrolysis of N-succinyl-L,L-diaminopimelic acid (SDAP), forming succinate and LL-2,6-diaminopimelate (DAP), an intermediate involved in the bacterial biosynthesis of lysine and meso-diaminopimelic acid, an essential component of bacterial cell walls. The chain is Succinyl-diaminopimelate desuccinylase from Chromohalobacter salexigens (strain ATCC BAA-138 / DSM 3043 / CIP 106854 / NCIMB 13768 / 1H11).